Consider the following 349-residue polypeptide: UDP-3-O-acylglucosamine N-acyltransferase (349 aa).

Histidine 246 acts as the Proton acceptor in catalysis.

This sequence belongs to the transferase hexapeptide repeat family. LpxD subfamily. In terms of assembly, homotrimer.

The enzyme catalyses a UDP-3-O-[(3R)-3-hydroxyacyl]-alpha-D-glucosamine + a (3R)-hydroxyacyl-[ACP] = a UDP-2-N,3-O-bis[(3R)-3-hydroxyacyl]-alpha-D-glucosamine + holo-[ACP] + H(+). The protein operates within bacterial outer membrane biogenesis; LPS lipid A biosynthesis. In terms of biological role, catalyzes the N-acylation of UDP-3-O-acylglucosamine using 3-hydroxyacyl-ACP as the acyl donor. Is involved in the biosynthesis of lipid A, a phosphorylated glycolipid that anchors the lipopolysaccharide to the outer membrane of the cell. The sequence is that of UDP-3-O-acylglucosamine N-acyltransferase from Protochlamydia amoebophila (strain UWE25).